A 55-amino-acid chain; its full sequence is Potassium channel toxin alpha-KTx 17.1 (55 aa).

The first 23 residues, M1–A23, serve as a signal peptide directing secretion. Q24 bears the Pyrrolidone carboxylic acid mark. 3 cysteine pairs are disulfide-bonded: C27-C43, C33-C48, and C37-C50. T53 carries the threonine amide modification.

It belongs to the short scorpion toxin superfamily. Potassium channel inhibitor family. Alpha-KTx 17 subfamily. In terms of tissue distribution, expressed by the venom gland.

The protein localises to the secreted. In terms of biological role, blocker of potassium channels, which inhibits both the delayed rectifier and fast transient potassium current. The inhibition is reversible and voltage-independent. It causes a depolarizing shift of the steady-state activation curve of the currents, without changing their steady-state inactivation behavior. This chain is Potassium channel toxin alpha-KTx 17.1, found in Olivierus martensii (Manchurian scorpion).